A 237-amino-acid chain; its full sequence is Indole-3-glycerol phosphate synthase (237 aa).

Belongs to the TrpC family.

The catalysed reaction is 1-(2-carboxyphenylamino)-1-deoxy-D-ribulose 5-phosphate + H(+) = (1S,2R)-1-C-(indol-3-yl)glycerol 3-phosphate + CO2 + H2O. It participates in amino-acid biosynthesis; L-tryptophan biosynthesis; L-tryptophan from chorismate: step 4/5. This is Indole-3-glycerol phosphate synthase from Thermoplasma volcanium (strain ATCC 51530 / DSM 4299 / JCM 9571 / NBRC 15438 / GSS1).